A 143-amino-acid polypeptide reads, in one-letter code: Transcriptional regulator MraZ (143 aa).

SpoVT-AbrB domains follow at residues 5-47 and 76-119; these read EFEH…PLSE and AVQC…NKAR.

It belongs to the MraZ family. Forms oligomers.

It localises to the cytoplasm. It is found in the nucleoid. The polypeptide is Transcriptional regulator MraZ (Pediococcus pentosaceus (strain ATCC 25745 / CCUG 21536 / LMG 10740 / 183-1w)).